The sequence spans 178 residues: Large ribosomal subunit protein uL6 (178 aa).

It belongs to the universal ribosomal protein uL6 family. As to quaternary structure, part of the 50S ribosomal subunit.

Its function is as follows. This protein binds to the 23S rRNA, and is important in its secondary structure. It is located near the subunit interface in the base of the L7/L12 stalk, and near the tRNA binding site of the peptidyltransferase center. The chain is Large ribosomal subunit protein uL6 from Listeria innocua serovar 6a (strain ATCC BAA-680 / CLIP 11262).